Here is a 2617-residue protein sequence, read N- to C-terminus: Ubiquitin carboxyl-terminal hydrolase 24 (2617 aa).

One can recognise a UBA domain in the interval serine 3 to glutamate 44. Positions arginine 45–histidine 99 are disordered. 2 positions are modified to phosphoserine: serine 62 and serine 85. Gly residues predominate over residues proline 65–phenylalanine 92. Position 939 is a phosphotyrosine (tyrosine 939). 2 disordered regions span residues lysine 1030–phenylalanine 1056 and leucine 1127–glutamine 1148. Composition is skewed to low complexity over residues threonine 1031–phenylalanine 1056 and leucine 1128–glutamine 1148. Phosphoserine is present on residues serine 1138 and serine 1282. Positions valine 1686–valine 2039 constitute a USP domain. Cysteine 1695 functions as the Nucleophile in the catalytic mechanism. The tract at residues glutamine 1920 to arginine 1942 is disordered. Serine 1940 is modified (phosphoserine). The active-site Proton acceptor is histidine 1967. 3 positions are modified to phosphoserine: serine 2044, serine 2074, and serine 2558. The interval alanine 2060–aspartate 2087 is disordered. Residues serine 2066 to proline 2079 show a composition bias toward low complexity. Threonine 2562 carries the post-translational modification Phosphothreonine. The interval glutamate 2572–proline 2617 is disordered. Positions serine 2576 to glutamate 2589 are enriched in low complexity. Serine 2601 carries the phosphoserine modification. The span at leucine 2608–proline 2617 shows a compositional bias: basic and acidic residues.

The protein belongs to the peptidase C19 family.

The catalysed reaction is Thiol-dependent hydrolysis of ester, thioester, amide, peptide and isopeptide bonds formed by the C-terminal Gly of ubiquitin (a 76-residue protein attached to proteins as an intracellular targeting signal).. Its function is as follows. Protease that can remove conjugated ubiquitin from target proteins and polyubiquitin chains. Deubiquitinates DDB2, preventing its proteasomal degradation. The protein is Ubiquitin carboxyl-terminal hydrolase 24 (Usp24) of Mus musculus (Mouse).